The sequence spans 169 residues: uncharacterized protein (169 aa).

2 disordered regions span residues V32–P53 and V148–A169.

This is an uncharacterized protein from Homo sapiens (Human).